Consider the following 340-residue polypeptide: S-adenosylmethionine:tRNA ribosyltransferase-isomerase (340 aa).

This sequence belongs to the QueA family. In terms of assembly, monomer.

Its subcellular location is the cytoplasm. The enzyme catalyses 7-aminomethyl-7-carbaguanosine(34) in tRNA + S-adenosyl-L-methionine = epoxyqueuosine(34) in tRNA + adenine + L-methionine + 2 H(+). It participates in tRNA modification; tRNA-queuosine biosynthesis. Its function is as follows. Transfers and isomerizes the ribose moiety from AdoMet to the 7-aminomethyl group of 7-deazaguanine (preQ1-tRNA) to give epoxyqueuosine (oQ-tRNA). This Campylobacter concisus (strain 13826) protein is S-adenosylmethionine:tRNA ribosyltransferase-isomerase.